A 175-amino-acid polypeptide reads, in one-letter code: Interleukin-10 (175 aa).

Residues 1 to 18 (MPSSALLYCLIFLAGVAA) form the signal peptide. 2 disulfides stabilise this stretch: C26/C122 and C76/C128. N-linked (GlcNAc...) asparagine glycosylation is present at N130.

This sequence belongs to the IL-10 family. Homodimer. Interacts with IL10RA and IL10RB.

Its subcellular location is the secreted. Functionally, major immune regulatory cytokine that acts on many cells of the immune system where it has profound anti-inflammatory functions, limiting excessive tissue disruption caused by inflammation. Mechanistically, IL10 binds to its heterotetrameric receptor comprising IL10RA and IL10RB leading to JAK1 and STAT2-mediated phosphorylation of STAT3. In turn, STAT3 translocates to the nucleus where it drives expression of anti-inflammatory mediators. Targets antigen-presenting cells (APCs) such as macrophages and monocytes and inhibits their release of pro-inflammatory cytokines including granulocyte-macrophage colony-stimulating factor /GM-CSF, granulocyte colony-stimulating factor/G-CSF, IL-1 alpha, IL-1 beta, IL-6, IL-8 and TNF-alpha. Also interferes with antigen presentation by reducing the expression of MHC-class II and co-stimulatory molecules, thereby inhibiting their ability to induce T cell activation. In addition, controls the inflammatory response of macrophages by reprogramming essential metabolic pathways including mTOR signaling. This is Interleukin-10 (IL10) from Sus scrofa (Pig).